Consider the following 120-residue polypeptide: Holo-[acyl-carrier-protein] synthase (120 aa).

Mg(2+) is bound by residues Asp8 and Glu58.

This sequence belongs to the P-Pant transferase superfamily. AcpS family. Mg(2+) serves as cofactor.

It is found in the cytoplasm. It catalyses the reaction apo-[ACP] + CoA = holo-[ACP] + adenosine 3',5'-bisphosphate + H(+). In terms of biological role, transfers the 4'-phosphopantetheine moiety from coenzyme A to a Ser of acyl-carrier-protein. This chain is Holo-[acyl-carrier-protein] synthase, found in Limosilactobacillus reuteri (strain DSM 20016) (Lactobacillus reuteri).